A 665-amino-acid polypeptide reads, in one-letter code: Succinate dehydrogenase [ubiquinone] flavoprotein subunit A, mitochondrial (665 aa).

The N-terminal 45 residues, 1-45 (MALLKVAPSRLLSRALQLASRVQNCTPTVTTARRNFHFTVYGRKD), are a transit peptide targeting the mitochondrion. 5 residues coordinate FAD: A72, A75, T94, K95, and S101. H102 is modified (tele-8alpha-FAD histidine). Residues T103, G108, A224, and D278 each contribute to the FAD site. 3 residues coordinate oxaloacetate: H299, R343, and H410. R343 (proton acceptor) is an active-site residue. E443 contributes to the FAD binding site. Positions 454 and 457 each coordinate oxaloacetate. 2 residues coordinate FAD: S459 and L460.

Belongs to the FAD-dependent oxidoreductase 2 family. FRD/SDH subfamily. In terms of assembly, component of complex II composed of four subunits: a flavoprotein (FP), an iron-sulfur protein (IP), and a cytochrome b composed of a large and a small subunit. FAD is required as a cofactor.

Its subcellular location is the mitochondrion inner membrane. It catalyses the reaction a ubiquinone + succinate = a ubiquinol + fumarate. The enzyme catalyses (R)-malate + a quinone = enol-oxaloacetate + a quinol. It carries out the reaction (S)-malate + a quinone = enol-oxaloacetate + a quinol. The protein operates within carbohydrate metabolism; tricarboxylic acid cycle; fumarate from succinate (eukaryal route): step 1/1. With respect to regulation, enol-oxaloacetate inhibits the succinate dehydrogenase activity. Flavoprotein (FP) subunit of succinate dehydrogenase (SDH) that is involved in complex II of the mitochondrial electron transport chain and is responsible for transferring electrons from succinate to ubiquinone (coenzyme Q). SDH also oxidizes malate to the non-canonical enol form of oxaloacetate, enol-oxaloacetate. Enol-oxaloacetate, which is a potent inhibitor of the succinate dehydrogenase activity, is further isomerized into keto-oxaloacetate. In Xenopus laevis (African clawed frog), this protein is Succinate dehydrogenase [ubiquinone] flavoprotein subunit A, mitochondrial (sdha-a).